A 421-amino-acid chain; its full sequence is F-box protein At2g17690 (421 aa).

The F-box domain occupies 2–50 (GDWSKLPEELLGLIALRLYSVIELIRFRSICKSWRSSASGVNKNHSLSS).

Its function is as follows. Involved in heat stress response. Contributes to recovery from heat stress. This chain is F-box protein At2g17690, found in Arabidopsis thaliana (Mouse-ear cress).